We begin with the raw amino-acid sequence, 240 residues long: UDP-2,3-diacylglucosamine hydrolase (240 aa).

5 residues coordinate Mn(2+): Asp8, His10, Asp41, Asn78, and His113. 78 to 79 serves as a coordination point for substrate; sequence NR. Residues Asp121, Ser159, Asn163, Lys166, and His194 each coordinate substrate. Mn(2+) is bound by residues His194 and His196.

Belongs to the LpxH family. The cofactor is Mn(2+).

It is found in the cell inner membrane. It carries out the reaction UDP-2-N,3-O-bis[(3R)-3-hydroxytetradecanoyl]-alpha-D-glucosamine + H2O = 2-N,3-O-bis[(3R)-3-hydroxytetradecanoyl]-alpha-D-glucosaminyl 1-phosphate + UMP + 2 H(+). Its pathway is glycolipid biosynthesis; lipid IV(A) biosynthesis; lipid IV(A) from (3R)-3-hydroxytetradecanoyl-[acyl-carrier-protein] and UDP-N-acetyl-alpha-D-glucosamine: step 4/6. In terms of biological role, hydrolyzes the pyrophosphate bond of UDP-2,3-diacylglucosamine to yield 2,3-diacylglucosamine 1-phosphate (lipid X) and UMP by catalyzing the attack of water at the alpha-P atom. Involved in the biosynthesis of lipid A, a phosphorylated glycolipid that anchors the lipopolysaccharide to the outer membrane of the cell. This chain is UDP-2,3-diacylglucosamine hydrolase, found in Shewanella baltica (strain OS223).